The chain runs to 60 residues: MNFSKLFALVLLIGLVLLTGQTEAGGLKKLGKKLEGVGKRVFKASEKALPVLTGYKAIGK.

The first 24 residues, 1–24 (MNFSKLFALVLLIGLVLLTGQTEA), serve as a signal peptide directing secretion. Isoleucine 58 bears the Isoleucine amide mark.

It belongs to the cecropin family.

The protein localises to the secreted. Cecropins have lytic and antibacterial activity against several Gram-positive and Gram-negative bacteria. The protein is Cecropin-B type 2 (CECB2) of Aedes albopictus (Asian tiger mosquito).